The primary structure comprises 274 residues: Subtilisin DY (274 aa).

Position 2 (Gln-2) interacts with Ca(2+). One can recognise a Peptidase S8 domain in the interval 5–273; sequence PYGIPLIKAD…KGLINVEAAA (269 aa). Asp-32 functions as the Charge relay system in the catalytic mechanism. Asp-41 serves as a coordination point for Ca(2+). His-63 (charge relay system) is an active-site residue. 6 residues coordinate Ca(2+): Leu-74, Asn-76, Val-80, Ala-168, Tyr-170, and Val-173. Ser-220 functions as the Charge relay system in the catalytic mechanism.

Belongs to the peptidase S8 family. Ca(2+) serves as cofactor.

It localises to the secreted. It carries out the reaction Hydrolysis of proteins with broad specificity for peptide bonds, and a preference for a large uncharged residue in P1. Hydrolyzes peptide amides.. Subtilisin is an extracellular alkaline serine protease, it catalyzes the hydrolysis of proteins and peptide amides. The sequence is that of Subtilisin DY (apr) from Bacillus licheniformis.